The sequence spans 118 residues: Small ribosomal subunit protein uS13 (118 aa).

Residues 94-118 (SLPLRGQRTKTNARTRKGPRKPIRK) are disordered.

Belongs to the universal ribosomal protein uS13 family. As to quaternary structure, part of the 30S ribosomal subunit. Forms a loose heterodimer with protein S19. Forms two bridges to the 50S subunit in the 70S ribosome.

Its function is as follows. Located at the top of the head of the 30S subunit, it contacts several helices of the 16S rRNA. In the 70S ribosome it contacts the 23S rRNA (bridge B1a) and protein L5 of the 50S subunit (bridge B1b), connecting the 2 subunits; these bridges are implicated in subunit movement. Contacts the tRNAs in the A and P-sites. This Shewanella baltica (strain OS223) protein is Small ribosomal subunit protein uS13.